A 603-amino-acid polypeptide reads, in one-letter code: Multicopper oxidase MCE (603 aa).

The first 21 residues, 1-21 (MNTFICSALICLSWLPGFIQA), serve as a signal peptide directing secretion. Positions 30–144 (ITYAKGAPDG…YGALWIRPKE (115 aa)) constitute a Plastocyanin-like 1 domain. N-linked (GlcNAc...) asparagine glycosylation occurs at asparagine 75. The Cu cation site is built by histidine 79, histidine 81, histidine 123, and histidine 125. 10 N-linked (GlcNAc...) asparagine glycosylation sites follow: asparagine 155, asparagine 180, asparagine 235, asparagine 256, asparagine 272, asparagine 275, asparagine 388, asparagine 394, asparagine 413, and asparagine 455. A Plastocyanin-like 2 domain is found at 173–353 (LIVSDWSNFT…TPGDYTIRLP (181 aa)). In terms of domain architecture, Plastocyanin-like 3 spans 450 to 581 (LLYNPNSTAA…GGMAGVIMDG (132 aa)). Residue histidine 495 coordinates Cu cation. N-linked (GlcNAc...) asparagine glycans are attached at residues asparagine 512 and asparagine 595.

Belongs to the multicopper oxidase family.

It catalyses the reaction 4 monapinone A + O2 = 2 dinapinone A + 2 H2O. The enzyme catalyses 4 monapinone E + O2 = 2 dinapinone E + 2 H2O. It functions in the pathway secondary metabolite biosynthesis. In terms of biological role, multicopper oxidase; part of the gene cluster that mediates the biosynthesis of dinapinones DPA1 (or (M)-DPA) and DPA2 (or (P)-DPA), biaryl dihydronaphthopyranones that act in concert as inhibitors of triacylglycerol accumulation in mammalian cells. The first step in the pathway corresponds to the biosynthesis of dihydroxy-decanoyl-CoA by the fungal type I fatty acid synthase (formed by ORF4 and ORF5). The cluster-specific polyketide synthase (ORF7) then accepts and extends dihydroxy-decanoyl-CoA with 6 malonyl-CoA moieties and cyclizes the molecule to produce a putative polyhydroxynaphthopyranone intermediate, which is further methylated by the cluster-specific methyltransferase (ORF1) at 7-OH to produce monapinone A (MPA). MCE catalyzes the regioselective biaryl coupling of monapinone A (MPA) at the 8,8'-positions to afford dimeric atropisomers DPA1 and DPA2 in a ratio of approximately 1:2.5. Monapinone E (MPE) also appears to be a substrate for MCE and provides the atropisomers dinapinones DPE1 (or (M)-DPE) and DPE2 (or (P)-DPE). The protein is Multicopper oxidase MCE of Talaromyces pinophilus (Penicillium pinophilum).